The following is a 433-amino-acid chain: Alpha-(1-&gt;3)-arabinofuranosyltransferase (433 aa).

10 helical membrane-spanning segments follow: residues 118-138, 140-160, 164-184, 197-217, 224-244, 280-300, 310-330, 333-353, 356-376, and 385-405; these read LFIS…LRMF, FTLT…TETV, LVFT…LRWL, LAIG…LLPL, ALVA…PLVS, WLIL…LWLL, LFWF…VMSL, GYYS…NSVI, WPAW…LFNW, and YLKI…VLYF.

Belongs to the glycosyltransferase 87 family.

The protein resides in the cell membrane. The enzyme catalyses Adds an alpha-D-arabinofuranosyl group from trans,octacis-decaprenylphospho-beta-D-arabinofuranose at the 3-O-position of an alpha-(1-&gt;5)-arabinofuranan chain attached to a beta-(1-&gt;5)-galactofuranan chain.. It functions in the pathway cell wall biogenesis; cell wall polysaccharide biosynthesis. Functionally, involved in the biosynthesis of the arabinogalactan (AG) region of the mycolylarabinogalactan-peptidoglycan (mAGP) complex, an essential component of the mycobacterial cell wall. Catalyzes the addition of an arabinofuranosyl (Araf) residue from the sugar donor beta-D-arabinofuranosyl-1-monophosphoryldecaprenol (DPA) on the C-3 of an alpha-(1-&gt;5)-linked Araf from the arabinan backbone of AG. In Mycobacterium tuberculosis (strain CDC 1551 / Oshkosh), this protein is Alpha-(1-&gt;3)-arabinofuranosyltransferase (aftC).